We begin with the raw amino-acid sequence, 209 residues long: Uracil phosphoribosyltransferase (209 aa).

Residues Arg-79, Arg-104, and 131–139 (DPMLATGGS) each bind 5-phospho-alpha-D-ribose 1-diphosphate. Uracil is bound by residues Val-194 and 199–201 (GDA). Asp-200 is a binding site for 5-phospho-alpha-D-ribose 1-diphosphate.

The protein belongs to the UPRTase family. It depends on Mg(2+) as a cofactor.

The enzyme catalyses UMP + diphosphate = 5-phospho-alpha-D-ribose 1-diphosphate + uracil. It functions in the pathway pyrimidine metabolism; UMP biosynthesis via salvage pathway; UMP from uracil: step 1/1. With respect to regulation, allosterically activated by GTP. Functionally, catalyzes the conversion of uracil and 5-phospho-alpha-D-ribose 1-diphosphate (PRPP) to UMP and diphosphate. This Clostridium botulinum (strain ATCC 19397 / Type A) protein is Uracil phosphoribosyltransferase.